The primary structure comprises 224 residues: UPF0758 protein PFL_6051 (224 aa).

An MPN domain is found at 102-224 (ALENPLVVRD…PLSMAEYGWI (123 aa)). Residues His173, His175, and Asp186 each coordinate Zn(2+). A JAMM motif motif is present at residues 173-186 (HNHPSGICEPSPAD).

This sequence belongs to the UPF0758 family.

This Pseudomonas fluorescens (strain ATCC BAA-477 / NRRL B-23932 / Pf-5) protein is UPF0758 protein PFL_6051.